The primary structure comprises 337 residues: Phosphate acyltransferase (337 aa).

Belongs to the PlsX family. As to quaternary structure, homodimer. Probably interacts with PlsY.

Its subcellular location is the cytoplasm. It catalyses the reaction a fatty acyl-[ACP] + phosphate = an acyl phosphate + holo-[ACP]. Its pathway is lipid metabolism; phospholipid metabolism. Catalyzes the reversible formation of acyl-phosphate (acyl-PO(4)) from acyl-[acyl-carrier-protein] (acyl-ACP). This enzyme utilizes acyl-ACP as fatty acyl donor, but not acyl-CoA. This Listeria monocytogenes serotype 4b (strain F2365) protein is Phosphate acyltransferase.